The primary structure comprises 457 residues: Acetylcholine receptor subunit alpha (457 aa).

The first 20 residues, 1 to 20 (MEPWPLLLLFSLCSAGLVLG), serve as a signal peptide directing secretion. Over 21 to 232 (SEHETRLVAK…YHFVMQRLPL (212 aa)) the chain is Extracellular. Cystine bridges form between Cys148-Cys162 and Cys212-Cys213. Asn161 carries an N-linked (GlcNAc...) asparagine glycan. The chain crosses the membrane as a helical span at residues 233-253 (YFIVNVIIPCLLFSFLTGLVF). At 254 to 264 (YLPTDSGEKMT) the chain is on the cytoplasmic side. The chain crosses the membrane as a helical span at residues 265–285 (LSISVLLSLTVFLLVIVELIP). Over 286–296 (STSSAVPLIGK) the chain is Extracellular. A helical membrane pass occupies residues 297–317 (YMLFTMVFVIASIIITVIVIN). Residues 318-427 (THHRSPSTHV…EWKYVAMVMD (110 aa)) are Cytoplasmic-facing. Residues 428 to 448 (HILLGVFMLVCIIGTLAVFAG) traverse the membrane as a helical segment. Topologically, residues 449-457 (RLIELNQQG) are extracellular.

It belongs to the ligand-gated ion channel (TC 1.A.9) family. Acetylcholine receptor (TC 1.A.9.1) subfamily. Alpha-1/CHRNA1 sub-subfamily. As to quaternary structure, one of the alpha chains that assemble within the acetylcholine receptor, a pentamer of two alpha chains, a beta, a delta, and a gamma (in immature muscle) or epsilon (in mature muscle) chains. The muscle heteropentamer composed of alpha-1, beta-1, delta, epsilon subunits interacts with the alpha-conotoxin ImII. In terms of assembly, is able to interact with other subunits of the acetylcholine receptor but is not assembled into functional acetylcholine-gated cation-selective channels. In terms of tissue distribution, isoform 1 is only expressed in skeletal muscle. Isoform 2 is constitutively expressed in skeletal muscle, brain, heart, kidney, liver, lung and thymus.

The protein resides in the postsynaptic cell membrane. It localises to the cell membrane. It catalyses the reaction K(+)(in) = K(+)(out). The catalysed reaction is Na(+)(in) = Na(+)(out). Upon acetylcholine binding, the AChR responds by an extensive change in conformation that affects all subunits and leads to opening of an ion-conducting channel across the plasma membrane. Functionally, non functional acetylcholine receptor alpha subunit which is not integrated into functional acetylcholine-gated cation-selective channels. The sequence is that of Acetylcholine receptor subunit alpha from Homo sapiens (Human).